We begin with the raw amino-acid sequence, 141 residues long: uncharacterized protein (141 aa).

In terms of domain architecture, HTH marR-type spans Arg-4–Lys-139. The segment at residues Val-53 to Glu-76 is a DNA-binding region (H-T-H motif).

This is an uncharacterized protein from Bacillus subtilis (strain 168).